A 319-amino-acid polypeptide reads, in one-letter code: Tetrahydromethanopterin S-methyltransferase subunit H (319 aa).

It belongs to the MtrH family. The complex is composed of 8 subunits; MtrA, MtrB, MtrC, MtrD, MtrE, MtrF, MtrG and MtrH.

It carries out the reaction 5-methyl-5,6,7,8-tetrahydromethanopterin + coenzyme M + 2 Na(+)(in) = 5,6,7,8-tetrahydromethanopterin + methyl-coenzyme M + 2 Na(+)(out). The protein operates within one-carbon metabolism; methanogenesis from CO(2); methyl-coenzyme M from 5,10-methylene-5,6,7,8-tetrahydromethanopterin: step 2/2. Its function is as follows. Part of a complex that catalyzes the formation of methyl-coenzyme M and tetrahydromethanopterin from coenzyme M and methyl-tetrahydromethanopterin. This is an energy-conserving, sodium-ion translocating step. MtrH catalyzes the transfer of the methyl group from methyl-tetrahydromethanopterin to the corrinoid prosthetic group of MtrA. This chain is Tetrahydromethanopterin S-methyltransferase subunit H, found in Methanococcus maripaludis (strain DSM 14266 / JCM 13030 / NBRC 101832 / S2 / LL).